The sequence spans 299 residues: NAD kinase (299 aa).

Asp-75 functions as the Proton acceptor in the catalytic mechanism. NAD(+)-binding positions include 75–76 (DG), 149–150 (ND), Arg-177, Asp-179, 190–195 (TAYALS), Ala-214, and Gln-248.

Belongs to the NAD kinase family. A divalent metal cation serves as cofactor.

It localises to the cytoplasm. The catalysed reaction is NAD(+) + ATP = ADP + NADP(+) + H(+). Involved in the regulation of the intracellular balance of NAD and NADP, and is a key enzyme in the biosynthesis of NADP. Catalyzes specifically the phosphorylation on 2'-hydroxyl of the adenosine moiety of NAD to yield NADP. The sequence is that of NAD kinase from Burkholderia thailandensis (strain ATCC 700388 / DSM 13276 / CCUG 48851 / CIP 106301 / E264).